Here is a 212-residue protein sequence, read N- to C-terminus: Large ribosomal subunit protein uL4 (212 aa).

The segment at 45 to 71 (RQGNASTKTRAEVRGGGRKPWRQKGTG) is disordered. The segment covering 60 to 71 (GGRKPWRQKGTG) has biased composition (basic residues).

The protein belongs to the universal ribosomal protein uL4 family. As to quaternary structure, part of the 50S ribosomal subunit.

In terms of biological role, one of the primary rRNA binding proteins, this protein initially binds near the 5'-end of the 23S rRNA. It is important during the early stages of 50S assembly. It makes multiple contacts with different domains of the 23S rRNA in the assembled 50S subunit and ribosome. Forms part of the polypeptide exit tunnel. The polypeptide is Large ribosomal subunit protein uL4 (Nostoc punctiforme (strain ATCC 29133 / PCC 73102)).